The sequence spans 496 residues: Glycerol kinase (496 aa).

Residue Thr-12 coordinates ADP. The ATP site is built by Thr-12, Thr-13, and Ser-14. Thr-12 serves as a coordination point for sn-glycerol 3-phosphate. Position 16 (Arg-16) interacts with ADP. The sn-glycerol 3-phosphate site is built by Arg-82, Glu-83, and Tyr-134. Glycerol contacts are provided by Arg-82, Glu-83, and Tyr-134. His-230 bears the Phosphohistidine; by HPr mark. Asp-244 is a binding site for sn-glycerol 3-phosphate. Asp-244 and Gln-245 together coordinate glycerol. Positions 266 and 309 each coordinate ADP. Positions 266, 309, 313, and 410 each coordinate ATP. Residues Gly-410 and Asn-414 each coordinate ADP.

This sequence belongs to the FGGY kinase family. In terms of processing, the phosphoenolpyruvate-dependent sugar phosphotransferase system (PTS), including enzyme I, and histidine-containing protein (HPr) are required for the phosphorylation of, which leads to the activation of the enzyme.

The catalysed reaction is glycerol + ATP = sn-glycerol 3-phosphate + ADP + H(+). It functions in the pathway polyol metabolism; glycerol degradation via glycerol kinase pathway; sn-glycerol 3-phosphate from glycerol: step 1/1. Inhibited by fructose 1,6-bisphosphate and p-chloromercuribenzoate (PCMB). In terms of biological role, key enzyme in the regulation of glycerol uptake and metabolism. Catalyzes the phosphorylation of glycerol to yield sn-glycerol 3-phosphate. This Thermus thermophilus protein is Glycerol kinase.